A 257-amino-acid polypeptide reads, in one-letter code: Snake venom serine protease KN11 (257 aa).

An N-terminal signal peptide occupies residues 1-18 (MVLIRVLANLLILQLSYA). The propeptide occupies 19–24 (QKSSEL). The region spanning 25 to 248 (VTGGHPCNIN…HLDWIKSIIA (224 aa)) is the Peptidase S1 domain. 6 cysteine pairs are disulfide-bonded: Cys31-Cys162, Cys49-Cys65, Cys97-Cys255, Cys141-Cys209, Cys173-Cys188, and Cys199-Cys224. Active-site charge relay system residues include His64 and Asp109. Residues Asn120 and Asn121 are each glycosylated (N-linked (GlcNAc...) asparagine). Ser203 (charge relay system) is an active-site residue.

It belongs to the peptidase S1 family. Snake venom subfamily. In terms of assembly, monomer. As to expression, expressed by the venom gland.

The protein resides in the secreted. Its function is as follows. Snake venom serine protease that may act in the hemostasis system of the prey. The protein is Snake venom serine protease KN11 of Trimeresurus stejnegeri (Chinese green tree viper).